Reading from the N-terminus, the 269-residue chain is Formamidopyrimidine-DNA glycosylase (269 aa).

The Schiff-base intermediate with DNA role is filled by Pro-2. Glu-3 (proton donor) is an active-site residue. Lys-57 acts as the Proton donor; for beta-elimination activity in catalysis. DNA-binding residues include His-90, Arg-109, and Lys-150. An FPG-type zinc finger spans residues 235–269 (QVYGKAGEPCPECGEAIQEQKIGQRNTFYCSYCQC). Catalysis depends on Arg-259, which acts as the Proton donor; for delta-elimination activity.

Belongs to the FPG family. Monomer. It depends on Zn(2+) as a cofactor.

The enzyme catalyses Hydrolysis of DNA containing ring-opened 7-methylguanine residues, releasing 2,6-diamino-4-hydroxy-5-(N-methyl)formamidopyrimidine.. The catalysed reaction is 2'-deoxyribonucleotide-(2'-deoxyribose 5'-phosphate)-2'-deoxyribonucleotide-DNA = a 3'-end 2'-deoxyribonucleotide-(2,3-dehydro-2,3-deoxyribose 5'-phosphate)-DNA + a 5'-end 5'-phospho-2'-deoxyribonucleoside-DNA + H(+). Functionally, involved in base excision repair of DNA damaged by oxidation or by mutagenic agents. Acts as a DNA glycosylase that recognizes and removes damaged bases. Has a preference for oxidized purines, such as 7,8-dihydro-8-oxoguanine (8-oxoG). Has AP (apurinic/apyrimidinic) lyase activity and introduces nicks in the DNA strand. Cleaves the DNA backbone by beta-delta elimination to generate a single-strand break at the site of the removed base with both 3'- and 5'-phosphates. The protein is Formamidopyrimidine-DNA glycosylase of Vibrio vulnificus (strain CMCP6).